A 283-amino-acid chain; its full sequence is Urease accessory protein UreD 2 (283 aa).

Over residues M1–R11 the composition is skewed to basic and acidic residues. The segment at M1–V30 is disordered. Residues V13 to P23 show a composition bias toward polar residues.

This sequence belongs to the UreD family. As to quaternary structure, ureD, UreF and UreG form a complex that acts as a GTP-hydrolysis-dependent molecular chaperone, activating the urease apoprotein by helping to assemble the nickel containing metallocenter of UreC. The UreE protein probably delivers the nickel.

It is found in the cytoplasm. In terms of biological role, required for maturation of urease via the functional incorporation of the urease nickel metallocenter. The chain is Urease accessory protein UreD 2 from Saccharopolyspora erythraea (strain ATCC 11635 / DSM 40517 / JCM 4748 / NBRC 13426 / NCIMB 8594 / NRRL 2338).